Here is a 149-residue protein sequence, read N- to C-terminus: SsrA-binding protein (149 aa).

Belongs to the SmpB family.

It is found in the cytoplasm. Functionally, required for rescue of stalled ribosomes mediated by trans-translation. Binds to transfer-messenger RNA (tmRNA), required for stable association of tmRNA with ribosomes. tmRNA and SmpB together mimic tRNA shape, replacing the anticodon stem-loop with SmpB. tmRNA is encoded by the ssrA gene; the 2 termini fold to resemble tRNA(Ala) and it encodes a 'tag peptide', a short internal open reading frame. During trans-translation Ala-aminoacylated tmRNA acts like a tRNA, entering the A-site of stalled ribosomes, displacing the stalled mRNA. The ribosome then switches to translate the ORF on the tmRNA; the nascent peptide is terminated with the 'tag peptide' encoded by the tmRNA and targeted for degradation. The ribosome is freed to recommence translation, which seems to be the essential function of trans-translation. The sequence is that of SsrA-binding protein from Thermosipho africanus (strain TCF52B).